Reading from the N-terminus, the 244-residue chain is tRNA (guanine-N(1)-)-methyltransferase (244 aa).

S-adenosyl-L-methionine is bound by residues glycine 120 and 140–145 (IGDYIL).

This sequence belongs to the RNA methyltransferase TrmD family. As to quaternary structure, homodimer.

The protein localises to the cytoplasm. It carries out the reaction guanosine(37) in tRNA + S-adenosyl-L-methionine = N(1)-methylguanosine(37) in tRNA + S-adenosyl-L-homocysteine + H(+). Its function is as follows. Specifically methylates guanosine-37 in various tRNAs. The chain is tRNA (guanine-N(1)-)-methyltransferase from Brucella abortus (strain S19).